We begin with the raw amino-acid sequence, 101 residues long: Secreted enzymes activator (101 aa).

Basic residues predominate over residues 1 to 10 (MSRRRRRASA). Disordered stretches follow at residues 1–26 (MSRR…PYGS) and 45–101 (TRLA…NGRG). A compositionally biased stretch (low complexity) spans 45 to 60 (TRLAASSRASRAAVGS). Residues 55–74 (RAAVGSFDGAKNRPASSRRQ) constitute a DNA-binding region (H-T-H motif).

Its function is as follows. Increases the production of several extracellular enzymes, like alkaline phosphatase, amylase, protease or lipase. When present in high concentrations, delays the production of pigments and sporulation. The sequence is that of Secreted enzymes activator (saf) from Streptomyces griseus.